The chain runs to 607 residues: Leucine-rich repeat-containing protein 63 (607 aa).

LRR repeat units follow at residues Gln-357 to Leu-378, Asn-380 to Leu-401, Tyr-403 to Leu-424, Tyr-426 to Leu-447, Ser-449 to Leu-470, Asn-471 to Arg-497, and Leu-498 to Lys-524.

In Rattus norvegicus (Rat), this protein is Leucine-rich repeat-containing protein 63 (Lrrc63).